Reading from the N-terminus, the 397-residue chain is Phosphoglycerate kinase (397 aa).

Residues Asp25–Asn27, Arg41, His64–Arg67, Arg118, and Arg151 each bind substrate. ATP-binding positions include Lys202, Glu324, and Gly350 to Thr353.

Belongs to the phosphoglycerate kinase family. As to quaternary structure, monomer.

The protein localises to the cytoplasm. It carries out the reaction (2R)-3-phosphoglycerate + ATP = (2R)-3-phospho-glyceroyl phosphate + ADP. It functions in the pathway carbohydrate degradation; glycolysis; pyruvate from D-glyceraldehyde 3-phosphate: step 2/5. This chain is Phosphoglycerate kinase, found in Leptothrix cholodnii (strain ATCC 51168 / LMG 8142 / SP-6) (Leptothrix discophora (strain SP-6)).